A 908-amino-acid polypeptide reads, in one-letter code: Protein translocase subunit SecA (908 aa).

ATP is bound by residues Q87, 105-109 (GEGKT), and D512. Residues 882–908 (DGEKVGRNDPCPCGSGKKYKQCHGKLT) form a disordered region. C892, C894, C903, and H904 together coordinate Zn(2+). Positions 898 to 908 (KKYKQCHGKLT) are enriched in basic residues.

The protein belongs to the SecA family. As to quaternary structure, monomer and homodimer. Part of the essential Sec protein translocation apparatus which comprises SecA, SecYEG and auxiliary proteins SecDF-YajC and YidC. The cofactor is Zn(2+).

The protein resides in the cell inner membrane. The protein localises to the cytoplasm. The enzyme catalyses ATP + H2O + cellular proteinSide 1 = ADP + phosphate + cellular proteinSide 2.. Part of the Sec protein translocase complex. Interacts with the SecYEG preprotein conducting channel. Has a central role in coupling the hydrolysis of ATP to the transfer of proteins into and across the cell membrane, serving both as a receptor for the preprotein-SecB complex and as an ATP-driven molecular motor driving the stepwise translocation of polypeptide chains across the membrane. This is Protein translocase subunit SecA from Shewanella amazonensis (strain ATCC BAA-1098 / SB2B).